Reading from the N-terminus, the 343-residue chain is Methionine synthase (343 aa).

4 residues coordinate Zn(2+): His-211, Cys-213, Glu-236, and Cys-315.

The protein belongs to the archaeal MetE family. It depends on Zn(2+) as a cofactor.

It participates in amino-acid biosynthesis; L-methionine biosynthesis via de novo pathway. Functionally, catalyzes the transfer of a methyl group to L-homocysteine resulting in methionine formation. The physiological methyl donor is unknown. The polypeptide is Methionine synthase (Thermoplasma acidophilum (strain ATCC 25905 / DSM 1728 / JCM 9062 / NBRC 15155 / AMRC-C165)).